The following is a 311-amino-acid chain: Aspartate carbamoyltransferase catalytic subunit (311 aa).

2 residues coordinate carbamoyl phosphate: R58 and T59. Residue K86 coordinates L-aspartate. Carbamoyl phosphate is bound by residues R108, H136, and Q139. L-aspartate-binding residues include R169 and R223. The carbamoyl phosphate site is built by G264 and P265.

Belongs to the aspartate/ornithine carbamoyltransferase superfamily. ATCase family. In terms of assembly, heterododecamer (2C3:3R2) of six catalytic PyrB chains organized as two trimers (C3), and six regulatory PyrI chains organized as three dimers (R2).

It carries out the reaction carbamoyl phosphate + L-aspartate = N-carbamoyl-L-aspartate + phosphate + H(+). It functions in the pathway pyrimidine metabolism; UMP biosynthesis via de novo pathway; (S)-dihydroorotate from bicarbonate: step 2/3. In terms of biological role, catalyzes the condensation of carbamoyl phosphate and aspartate to form carbamoyl aspartate and inorganic phosphate, the committed step in the de novo pyrimidine nucleotide biosynthesis pathway. The chain is Aspartate carbamoyltransferase catalytic subunit from Pelodictyon phaeoclathratiforme (strain DSM 5477 / BU-1).